The sequence spans 200 residues: Molybdenum cofactor guanylyltransferase (200 aa).

GTP-binding positions include 10 to 12 (LAG), Lys-23, Asn-51, Asp-69, and Asp-99. Asp-99 contacts Mg(2+).

It belongs to the MobA family. Monomer. It depends on Mg(2+) as a cofactor.

The protein localises to the cytoplasm. The enzyme catalyses Mo-molybdopterin + GTP + H(+) = Mo-molybdopterin guanine dinucleotide + diphosphate. Functionally, transfers a GMP moiety from GTP to Mo-molybdopterin (Mo-MPT) cofactor (Moco or molybdenum cofactor) to form Mo-molybdopterin guanine dinucleotide (Mo-MGD) cofactor. The protein is Molybdenum cofactor guanylyltransferase of Shewanella pealeana (strain ATCC 700345 / ANG-SQ1).